The chain runs to 287 residues: Putative glutamate--cysteine ligase regulatory subunit (287 aa).

This sequence belongs to the aldo/keto reductase family. Glutamate--cysteine ligase light chain subfamily. Heterodimer of a catalytic heavy chain and a regulatory light chain.

It localises to the cytoplasm. It participates in sulfur metabolism; glutathione biosynthesis; glutathione from L-cysteine and L-glutamate: step 1/2. The sequence is that of Putative glutamate--cysteine ligase regulatory subunit from Schizosaccharomyces pombe (strain 972 / ATCC 24843) (Fission yeast).